The following is a 418-amino-acid chain: Glutamyl-tRNA reductase (418 aa).

Substrate is bound by residues 49–52 (TCNR), serine 109, 114–116 (EPQ), and glutamine 120. The Nucleophile role is filled by cysteine 50. 189–194 (GAGETI) provides a ligand contact to NADP(+).

This sequence belongs to the glutamyl-tRNA reductase family. Homodimer.

The catalysed reaction is (S)-4-amino-5-oxopentanoate + tRNA(Glu) + NADP(+) = L-glutamyl-tRNA(Glu) + NADPH + H(+). It functions in the pathway porphyrin-containing compound metabolism; protoporphyrin-IX biosynthesis; 5-aminolevulinate from L-glutamyl-tRNA(Glu): step 1/2. Catalyzes the NADPH-dependent reduction of glutamyl-tRNA(Glu) to glutamate 1-semialdehyde (GSA). The chain is Glutamyl-tRNA reductase from Salmonella heidelberg (strain SL476).